The sequence spans 83 residues: Apolipoprotein C-I, basic form (83 aa).

Positions 1-26 are cleaved as a signal peptide; that stretch reads MRLFLSLPVLVVVLSMVLEGPAPAQG.

It belongs to the apolipoprotein C1 family.

Its subcellular location is the secreted. In terms of biological role, inhibitor of lipoprotein binding to the low density lipoprotein (LDL) receptor, LDL receptor-related protein, and very low density lipoprotein (VLDL) receptor. Associates with high density lipoproteins (HDL) and the triacylglycerol-rich lipoproteins in the plasma and makes up about 10% of the protein of the VLDL and 2% of that of HDL. Appears to interfere directly with fatty acid uptake and is also the major plasma inhibitor of cholesteryl ester transfer protein (CETP). Binds free fatty acids and reduces their intracellular esterification. Modulates the interaction of APOE with beta-migrating VLDL and inhibits binding of beta-VLDL to the LDL receptor-related protein. The polypeptide is Apolipoprotein C-I, basic form (APOC1B) (Colobus guereza (Mantled guereza)).